The following is a 229-amino-acid chain: Ribonuclease 3 (229 aa).

The region spanning 5–127 (LSRLERQLGY…LIGAIYLDAG (123 aa)) is the RNase III domain. Residue E40 coordinates Mg(2+). D44 is a catalytic residue. 2 residues coordinate Mg(2+): D113 and E116. E116 is a catalytic residue. One can recognise a DRBM domain in the interval 154-224 (DPKTRLQEFL…AAAALIALGV (71 aa)).

This sequence belongs to the ribonuclease III family. As to quaternary structure, homodimer. Mg(2+) serves as cofactor.

It localises to the cytoplasm. It carries out the reaction Endonucleolytic cleavage to 5'-phosphomonoester.. In terms of biological role, digests double-stranded RNA. Involved in the processing of primary rRNA transcript to yield the immediate precursors to the large and small rRNAs (23S and 16S). Processes some mRNAs, and tRNAs when they are encoded in the rRNA operon. Processes pre-crRNA and tracrRNA of type II CRISPR loci if present in the organism. This chain is Ribonuclease 3, found in Pseudomonas fluorescens (strain ATCC BAA-477 / NRRL B-23932 / Pf-5).